Reading from the N-terminus, the 344-residue chain is Anthranilate phosphoribosyltransferase (344 aa).

5-phospho-alpha-D-ribose 1-diphosphate-binding positions include G84, 87-88, T92, 94-97, 112-120, and S124; these read GD, NIST, and KHGGRSVSS. G84 is an anthranilate binding site. S96 serves as a coordination point for Mg(2+). Residue R170 participates in anthranilate binding. Mg(2+) is bound by residues D229 and E230.

This sequence belongs to the anthranilate phosphoribosyltransferase family. As to quaternary structure, homodimer. It depends on Mg(2+) as a cofactor.

The enzyme catalyses N-(5-phospho-beta-D-ribosyl)anthranilate + diphosphate = 5-phospho-alpha-D-ribose 1-diphosphate + anthranilate. The protein operates within amino-acid biosynthesis; L-tryptophan biosynthesis; L-tryptophan from chorismate: step 2/5. Its function is as follows. Catalyzes the transfer of the phosphoribosyl group of 5-phosphorylribose-1-pyrophosphate (PRPP) to anthranilate to yield N-(5'-phosphoribosyl)-anthranilate (PRA). In Janthinobacterium sp. (strain Marseille) (Minibacterium massiliensis), this protein is Anthranilate phosphoribosyltransferase.